The sequence spans 588 residues: Aspartate--tRNA ligase (588 aa).

Glu-172 contributes to the L-aspartate binding site. The interval 196-199 (QLFK) is aspartate. L-aspartate is bound at residue Arg-218. Residues 218-220 (RDE) and Gln-227 contribute to the ATP site. His-449 is an L-aspartate binding site. Residue Glu-483 participates in ATP binding. Arg-490 is an L-aspartate binding site. Position 535–538 (535–538 (GLDR)) interacts with ATP.

Belongs to the class-II aminoacyl-tRNA synthetase family. Type 1 subfamily. Homodimer.

It is found in the cytoplasm. It catalyses the reaction tRNA(Asp) + L-aspartate + ATP = L-aspartyl-tRNA(Asp) + AMP + diphosphate. Functionally, catalyzes the attachment of L-aspartate to tRNA(Asp) in a two-step reaction: L-aspartate is first activated by ATP to form Asp-AMP and then transferred to the acceptor end of tRNA(Asp). The sequence is that of Aspartate--tRNA ligase from Haemophilus influenzae (strain 86-028NP).